The following is a 215-amino-acid chain: Sec-independent protein translocase protein TatB (215 aa).

A helical membrane pass occupies residues 1 to 21 (MLDIGWTELVVIAIVLIIVVG). Disordered stretches follow at residues 95–119 (DLQK…EPVN) and 138–215 (AVSS…KGDA). Residues 145 to 157 (QMDRAADVPKASE) are compositionally biased toward basic and acidic residues. Positions 203-215 (SKTRAASRKKGDA) are enriched in basic residues.

This sequence belongs to the TatB family. As to quaternary structure, the Tat system comprises two distinct complexes: a TatABC complex, containing multiple copies of TatA, TatB and TatC subunits, and a separate TatA complex, containing only TatA subunits. Substrates initially bind to the TatABC complex, which probably triggers association of the separate TatA complex to form the active translocon.

The protein resides in the cell inner membrane. Functionally, part of the twin-arginine translocation (Tat) system that transports large folded proteins containing a characteristic twin-arginine motif in their signal peptide across membranes. Together with TatC, TatB is part of a receptor directly interacting with Tat signal peptides. TatB may form an oligomeric binding site that transiently accommodates folded Tat precursor proteins before their translocation. In Rhizobium meliloti (strain 1021) (Ensifer meliloti), this protein is Sec-independent protein translocase protein TatB.